The following is a 914-amino-acid chain: Isoleucine--tRNA ligase (914 aa).

Residues 64-74 (PYANGNFHLGH) carry the 'HIGH' region motif. Glu-557 contacts L-isoleucyl-5'-AMP. A 'KMSKS' region motif is present at residues 598–602 (PMSKS). An ATP-binding site is contributed by Lys-601. Positions 889, 892, 906, and 909 each coordinate Zn(2+).

The protein belongs to the class-I aminoacyl-tRNA synthetase family. IleS type 1 subfamily. Monomer. It depends on Zn(2+) as a cofactor.

It is found in the cytoplasm. The enzyme catalyses tRNA(Ile) + L-isoleucine + ATP = L-isoleucyl-tRNA(Ile) + AMP + diphosphate. In terms of biological role, catalyzes the attachment of isoleucine to tRNA(Ile). As IleRS can inadvertently accommodate and process structurally similar amino acids such as valine, to avoid such errors it has two additional distinct tRNA(Ile)-dependent editing activities. One activity is designated as 'pretransfer' editing and involves the hydrolysis of activated Val-AMP. The other activity is designated 'posttransfer' editing and involves deacylation of mischarged Val-tRNA(Ile). This is Isoleucine--tRNA ligase from Leptospira interrogans serogroup Icterohaemorrhagiae serovar Lai (strain 56601).